The sequence spans 224 residues: 7-cyano-7-deazaguanine synthase (224 aa).

8 to 18 contacts ATP; that stretch reads LSGGMDSAAVI. 4 residues coordinate Zn(2+): Cys-186, Cys-196, Cys-199, and Cys-202.

The protein belongs to the QueC family. Zn(2+) is required as a cofactor.

It catalyses the reaction 7-carboxy-7-deazaguanine + NH4(+) + ATP = 7-cyano-7-deazaguanine + ADP + phosphate + H2O + H(+). The protein operates within purine metabolism; 7-cyano-7-deazaguanine biosynthesis. Functionally, catalyzes the ATP-dependent conversion of 7-carboxy-7-deazaguanine (CDG) to 7-cyano-7-deazaguanine (preQ(0)). The chain is 7-cyano-7-deazaguanine synthase from Xanthomonas oryzae pv. oryzae (strain MAFF 311018).